Consider the following 214-residue polypeptide: uncharacterized protein (214 aa).

In terms of biological role, URF2 product may be involved in the transfer of iron-sulfur clusters to the NADH dehydrogenase complex. It may also be required for the assembly of the NADH dehydrogenase complex. This is an uncharacterized protein from Paracoccus denitrificans.